Consider the following 707-residue polypeptide: MAP kinase-interacting serine/threonine-protein kinase mnk-1 (707 aa).

A compositionally biased stretch (polar residues) spans 1–24 (MFFLDNTDSMTSSSRGITMPNTIS). Disordered stretches follow at residues 1 to 29 (MFFL…HEDV) and 101 to 131 (RQRE…YVGR). The 291-residue stretch at 203-493 (KLTDEHLGSG…ADQILSHRWL (291 aa)) folds into the Protein kinase domain. ATP is bound by residues 209 to 217 (LGSGAYGSV) and Lys232. Asp325 (proton acceptor) is an active-site residue. Disordered regions lie at residues 589–628 (RSGE…SADD) and 688–707 (FEDE…QVNV).

It belongs to the protein kinase superfamily. CAMK Ser/Thr protein kinase family. Mg(2+) serves as cofactor. As to expression, expressed in pharynx, intestine, vulva and body wall muscles.

The protein localises to the nucleus. Its subcellular location is the cytoplasm. It carries out the reaction L-seryl-[protein] + ATP = O-phospho-L-seryl-[protein] + ADP + H(+). It catalyses the reaction L-threonyl-[protein] + ATP = O-phospho-L-threonyl-[protein] + ADP + H(+). Functionally, serine/threonine-protein kinase which is required in the germline to positively regulate lifespan. May play a role in body wall muscle contraction. May be involved in embryonic cytokinesis. The protein is MAP kinase-interacting serine/threonine-protein kinase mnk-1 of Caenorhabditis elegans.